The chain runs to 41 residues: U-megalopygitoxin(11)-Mo28 (41 aa).

The first 29 residues, 1–29 (MRTTLLLLIIAITVMVFVSEAYAAPAPEP), serve as a signal peptide directing secretion.

The protein belongs to the caterpillar 11 family. Expressed by the venom apparatus.

It localises to the secreted. In terms of biological role, probable toxin. This is U-megalopygitoxin(11)-Mo28 from Megalopyge opercularis (Southern flannel moth).